The primary structure comprises 168 residues: Photosystem I assembly protein Ycf3 (168 aa).

3 TPR repeats span residues 35 to 68 (AFTY…EIDP), 72 to 105 (SYIL…NPFL), and 120 to 153 (GEQA…TPGN).

Belongs to the Ycf3 family.

It is found in the plastid. It localises to the chloroplast thylakoid membrane. Its function is as follows. Essential for the assembly of the photosystem I (PSI) complex. May act as a chaperone-like factor to guide the assembly of the PSI subunits. In Atropa belladonna (Belladonna), this protein is Photosystem I assembly protein Ycf3.